The chain runs to 314 residues: tRNA pseudouridine synthase B (314 aa).

H43 contributes to the substrate binding site. Catalysis depends on D48, which acts as the Nucleophile. Positions 76, 179, and 200 each coordinate substrate.

It belongs to the pseudouridine synthase TruB family. Type 1 subfamily.

It carries out the reaction uridine(55) in tRNA = pseudouridine(55) in tRNA. In terms of biological role, responsible for synthesis of pseudouridine from uracil-55 in the psi GC loop of transfer RNAs. The protein is tRNA pseudouridine synthase B of Salmonella arizonae (strain ATCC BAA-731 / CDC346-86 / RSK2980).